The primary structure comprises 431 residues: NADH-quinone oxidoreductase subunit F (431 aa).

G54 to G63 provides a ligand contact to NAD(+). G167–S214 contributes to the FMN binding site. 4 residues coordinate [4Fe-4S] cluster: C346, C349, C352, and C392.

This sequence belongs to the complex I 51 kDa subunit family. Requires FMN as cofactor. It depends on [4Fe-4S] cluster as a cofactor.

It carries out the reaction a quinone + NADH + 5 H(+)(in) = a quinol + NAD(+) + 4 H(+)(out). Its function is as follows. NDH-1 shuttles electrons from NADH, via FMN and iron-sulfur (Fe-S) centers, to quinones in the respiratory chain. The immediate electron acceptor for the enzyme in this species is believed to be ubiquinone. Couples the redox reaction to proton translocation (for every two electrons transferred, four hydrogen ions are translocated across the cytoplasmic membrane), and thus conserves the redox energy in a proton gradient. The chain is NADH-quinone oxidoreductase subunit F (nuoF) from Rhodobacter capsulatus (Rhodopseudomonas capsulata).